The chain runs to 203 residues: uncharacterized protein (203 aa).

It belongs to the DadA oxidoreductase family.

Either a functional dehydrogenase or a non-functional fragment. This is an uncharacterized protein from Sinorhizobium fredii (strain NBRC 101917 / NGR234).